Here is a 355-residue protein sequence, read N- to C-terminus: uncharacterized protein (355 aa).

The tract at residues 1–104 is disordered; that stretch reads MGTKGLPLYP…EQAKTVQGGR (104 aa). K19 carries the post-translational modification N6-acetyllysine. The segment covering 45 to 54 has biased composition (acidic residues); it reads EEGTDLEGDM. Phosphoserine is present on S175. Disordered regions lie at residues 247-310 and 325-355; these read PRGS…AAYK and SITSLSSRTTELPAADPFALAPFPSKSGKKP. Phosphotyrosine is present on Y293. The residue at position 294 (S294) is a Phosphoserine. Residues 325–334 show a composition bias toward polar residues; sequence SITSLSSRTT. Residues 336–348 are compositionally biased toward low complexity; it reads LPAADPFALAPFP.

This is an uncharacterized protein from Homo sapiens (Human).